Reading from the N-terminus, the 434-residue chain is ATP-dependent protease ATPase subunit HslU (434 aa).

Residues Ile18, 60–65 (GVGKTE), Asp247, Glu312, and Arg384 contribute to the ATP site.

It belongs to the ClpX chaperone family. HslU subfamily. A double ring-shaped homohexamer of HslV is capped on each side by a ring-shaped HslU homohexamer. The assembly of the HslU/HslV complex is dependent on binding of ATP.

It localises to the cytoplasm. Functionally, ATPase subunit of a proteasome-like degradation complex; this subunit has chaperone activity. The binding of ATP and its subsequent hydrolysis by HslU are essential for unfolding of protein substrates subsequently hydrolyzed by HslV. HslU recognizes the N-terminal part of its protein substrates and unfolds these before they are guided to HslV for hydrolysis. The protein is ATP-dependent protease ATPase subunit HslU of Sinorhizobium fredii (strain NBRC 101917 / NGR234).